The following is a 498-amino-acid chain: Glycerol kinase (498 aa).

Thr-11 is a binding site for ADP. 3 residues coordinate ATP: Thr-11, Thr-12, and Ser-13. A sn-glycerol 3-phosphate-binding site is contributed by Thr-11. Arg-15 lines the ADP pocket. 4 residues coordinate sn-glycerol 3-phosphate: Arg-81, Glu-82, Tyr-133, and Asp-242. Residues Arg-81, Glu-82, Tyr-133, Asp-242, and Gln-243 each coordinate glycerol. Residues Thr-264 and Gly-307 each coordinate ADP. Positions 264, 307, 311, and 411 each coordinate ATP. Gly-411 contacts ADP.

It belongs to the FGGY kinase family.

The enzyme catalyses glycerol + ATP = sn-glycerol 3-phosphate + ADP + H(+). Its pathway is polyol metabolism; glycerol degradation via glycerol kinase pathway; sn-glycerol 3-phosphate from glycerol: step 1/1. With respect to regulation, inhibited by fructose 1,6-bisphosphate (FBP). Key enzyme in the regulation of glycerol uptake and metabolism. Catalyzes the phosphorylation of glycerol to yield sn-glycerol 3-phosphate. This Afipia carboxidovorans (strain ATCC 49405 / DSM 1227 / KCTC 32145 / OM5) (Oligotropha carboxidovorans) protein is Glycerol kinase.